Reading from the N-terminus, the 401-residue chain is Elongation factor Tu (401 aa).

Residues 10 to 211 form the tr-type G domain; it reads KPHLNVGTIG…ALDTFVPNPK (202 aa). Residues 19-26 are G1; the sequence is GHVDHGKT. Position 19 to 26 (19 to 26) interacts with GTP; that stretch reads GHVDHGKT. Position 26 (T26) interacts with Mg(2+). Positions 62–66 are G2; it reads GITIA. The G3 stretch occupies residues 83 to 86; the sequence is DCPG. GTP-binding positions include 83–87 and 138–141; these read DCPGH and NKAD. The interval 138–141 is G4; it reads NKAD. A G5 region spans residues 179–181; that stretch reads SAV.

It belongs to the TRAFAC class translation factor GTPase superfamily. Classic translation factor GTPase family. EF-Tu/EF-1A subfamily. Monomer.

It is found in the cytoplasm. It carries out the reaction GTP + H2O = GDP + phosphate + H(+). GTP hydrolase that promotes the GTP-dependent binding of aminoacyl-tRNA to the A-site of ribosomes during protein biosynthesis. The polypeptide is Elongation factor Tu (Leptospira borgpetersenii serovar Hardjo-bovis (strain JB197)).